We begin with the raw amino-acid sequence, 135 residues long: Galectin-1 (135 aa).

A2 is modified (N-acetylalanine). The Galectin domain maps to 4–135; sequence GLVASNLNLK…DFKIKCVAFE (132 aa). K13, K19, and K29 each carry N6-acetyllysine. The residue at position 30 (S30) is a Phosphoserine. Residues 45–49, H53, N62, and 69–72 contribute to the a beta-D-galactoside site; these read HFNPR and WGTE. K108 carries the N6-acetyllysine; alternate modification. K108 is subject to N6-succinyllysine; alternate. The residue at position 128 (K128) is an N6-acetyllysine.

Binds LGALS3BP. Interacts with CD2, CD3, CD4, CD6, CD7, CD43, ALCAM and CD45. Interacts with laminin. Interacts with SUSD2. Exists in a reversible and active monomer-homodimer equilibrium, the mononomer/dimer state is regulated by lectin concentration. Interacts with cargo receptor TMED10; the interaction mediates the translocation from the cytoplasm into the ERGIC (endoplasmic reticulum-Golgi intermediate compartment) and thereby secretion.

The protein resides in the cytoplasm. The protein localises to the secreted. It localises to the extracellular space. It is found in the extracellular matrix. In terms of biological role, lectin that binds beta-galactoside and a wide array of complex carbohydrates. Plays a role in regulating apoptosis, cell proliferation and cell differentiation. Inhibits CD45 protein phosphatase activity and therefore the dephosphorylation of Lyn kinase. Strong inducer of T-cell apoptosis. In Cricetulus griseus (Chinese hamster), this protein is Galectin-1 (LGALS1).